Here is a 196-residue protein sequence, read N- to C-terminus: ATP-dependent Clp protease proteolytic subunit (196 aa).

The active-site Nucleophile is S101. H126 is an active-site residue.

Belongs to the peptidase S14 family. In terms of assembly, component of the chloroplastic Clp protease core complex.

Its subcellular location is the plastid. It is found in the chloroplast stroma. It carries out the reaction Hydrolysis of proteins to small peptides in the presence of ATP and magnesium. alpha-casein is the usual test substrate. In the absence of ATP, only oligopeptides shorter than five residues are hydrolyzed (such as succinyl-Leu-Tyr-|-NHMec, and Leu-Tyr-Leu-|-Tyr-Trp, in which cleavage of the -Tyr-|-Leu- and -Tyr-|-Trp bonds also occurs).. In terms of biological role, cleaves peptides in various proteins in a process that requires ATP hydrolysis. Has a chymotrypsin-like activity. Plays a major role in the degradation of misfolded proteins. The protein is ATP-dependent Clp protease proteolytic subunit of Coffea arabica (Arabian coffee).